A 375-amino-acid polypeptide reads, in one-letter code: 23S rRNA (uracil(747)-C(5))-methyltransferase RlmC (375 aa).

Positions 3, 11, 14, and 87 each coordinate [4Fe-4S] cluster. 4 residues coordinate S-adenosyl-L-methionine: Gln-212, Phe-241, Glu-262, and Asn-307. The active-site Nucleophile is the Cys-334.

This sequence belongs to the class I-like SAM-binding methyltransferase superfamily. RNA M5U methyltransferase family. RlmC subfamily.

It carries out the reaction uridine(747) in 23S rRNA + S-adenosyl-L-methionine = 5-methyluridine(747) in 23S rRNA + S-adenosyl-L-homocysteine + H(+). Functionally, catalyzes the formation of 5-methyl-uridine at position 747 (m5U747) in 23S rRNA. This chain is 23S rRNA (uracil(747)-C(5))-methyltransferase RlmC, found in Escherichia coli (strain SE11).